The following is a 156-amino-acid chain: Small ribosomal subunit protein uS7 (156 aa).

It belongs to the universal ribosomal protein uS7 family. Part of the 30S ribosomal subunit. Contacts proteins S9 and S11.

Its function is as follows. One of the primary rRNA binding proteins, it binds directly to 16S rRNA where it nucleates assembly of the head domain of the 30S subunit. Is located at the subunit interface close to the decoding center, probably blocks exit of the E-site tRNA. This is Small ribosomal subunit protein uS7 from Limosilactobacillus reuteri (strain DSM 20016) (Lactobacillus reuteri).